We begin with the raw amino-acid sequence, 284 residues long: Methylglyoxal reductase YeaE (284 aa).

Belongs to the aldo/keto reductase family.

It carries out the reaction hydroxyacetone + NADP(+) = methylglyoxal + NADPH + H(+). The enzyme catalyses a primary alcohol + NADP(+) = an aldehyde + NADPH + H(+). Functionally, aldo-keto reductase that contributes to cellular methylglyoxal detoxification by catalyzing the NADPH-dependent conversion of methylglyoxal to acetol. It also exhibits activity with glyoxal and probably plays a significant role in detoxification of glyoxal in vivo. Can also use aromatic aldehydes such as 4-nitrobenzaldehyde, 3-nitrobenzaldehyde and benzaldehyde, and phenylglyoxal. The sequence is that of Methylglyoxal reductase YeaE (yeaE) from Escherichia coli (strain K12).